Consider the following 252-residue polypeptide: Transcriptional regulatory protein HptR (252 aa).

The 116-residue stretch at 3–118 folds into the Response regulatory domain; the sequence is KVVICDDERI…QLEVILGRLV (116 aa). A 4-aspartylphosphate modification is found at D55. Residues 153–250 enclose the HTH araC/xylS-type domain; sequence NQIVDQIKQS…QMAPSDYCKQ (98 aa). DNA-binding regions (H-T-H motif) lie at residues 170–191 and 217–240; these read SDLIQHIDVSESYAMRTFKDHV and HYEIADKVGFSEYKMFSYHFKKYL.

Phosphorylated by HptS.

It is found in the cytoplasm. Member of the two-component regulatory system HptS/HptR that regulates genes involved in hexose phosphate transport system in response to changes in extracellular phosphate sources. Activates uhpT expression to facilitate glucose-6-phosphate/G6P utilization by directly binding to its promoter. Antagonizes CcpA-dependent transcription of a subset of CcpA-regulated genes involved in antibiotic susceptibility. The protein is Transcriptional regulatory protein HptR (hptR) of Staphylococcus aureus (strain bovine RF122 / ET3-1).